The following is a 367-amino-acid chain: Uroporphyrinogen decarboxylase (367 aa).

Substrate is bound by residues 28 to 32, Asp-78, Tyr-158, Thr-213, and His-334; that span reads RQAGR.

The protein belongs to the uroporphyrinogen decarboxylase family. As to quaternary structure, homodimer.

The protein localises to the cytoplasm. The catalysed reaction is uroporphyrinogen III + 4 H(+) = coproporphyrinogen III + 4 CO2. The protein operates within porphyrin-containing compound metabolism; protoporphyrin-IX biosynthesis; coproporphyrinogen-III from 5-aminolevulinate: step 4/4. In terms of biological role, catalyzes the decarboxylation of four acetate groups of uroporphyrinogen-III to yield coproporphyrinogen-III. The sequence is that of Uroporphyrinogen decarboxylase from Ralstonia pickettii (strain 12J).